A 173-amino-acid chain; its full sequence is Copper transport protein ctr5 (173 aa).

The Extracellular segment spans residues 1–54; the sequence is MSLSKMSMSGMSGMGMGSSSNSSAATCRMSMLWNWYIHDSCFLAKSWHINTGNK. The chain crosses the membrane as a helical span at residues 55-75; that stretch reads FAGSIIGIFFFAVAIEGLSLV. Residues 76-135 are Cytoplasmic-facing; that stretch reads QRMFDRWIVAHSNGKTLSGPLRIFFPSSTVHVTVWQQLIRAAMYSSFYLSATILMLIVMS. The helical transmembrane segment at 136–156 threads the bilayer; sequence FNGYAILFGFVGAWIGFFLFA. The Extracellular segment spans residues 157 to 173; it reads SDTYGTPSTGTGCCESR.

Belongs to the copper transporter (Ctr) (TC 1.A.56) family. SLC31A subfamily. In terms of assembly, interacts with ctr4.

It is found in the membrane. Functionally, required for high affinity copper (probably reduced Cu I) transport into the cell. The polypeptide is Copper transport protein ctr5 (ctr5) (Schizosaccharomyces pombe (strain 972 / ATCC 24843) (Fission yeast)).